Here is a 618-residue protein sequence, read N- to C-terminus: Sodium/iodide cotransporter (618 aa).

Topologically, residues 1 to 14 (MEGAEAGARATFGA) are extracellular. The helical transmembrane segment at 15-31 (WDYGVFATMLLVSTGIG) threads the bilayer. The Cytoplasmic portion of the chain corresponds to 32-56 (LWVGLARGGQRSADDFFTGGRQLAA). A discontinuously helical transmembrane segment spans residues 57-80 (VPVGLSLAASFMSAVQVLGVPAEA). Serine 69, valine 71, and glutamine 72 together coordinate Na(+). An iodide-binding site is contributed by valine 76. Topologically, residues 81–84 (ARYG) are extracellular. A helical membrane pass occupies residues 85–105 (LKFLWMCAGQLLNSLLTAFLF). Iodide is bound at residue methionine 90. The Cytoplasmic segment spans residues 106–130 (LPIFYRLGLTSTYQYLELRFSRAVR). A helical transmembrane segment spans residues 131-157 (LCGTLQYLVATMLYTGIVIYAPALILN). Tyrosine 144 contributes to the Na(+) binding site. Topologically, residues 158–163 (QVTGLD) are extracellular. The helical transmembrane segment at 164-181 (IWASLLSTGIICTLYTTV) threads the bilayer. The Cytoplasmic segment spans residues 182 to 189 (GGMKAVVW). A helical membrane pass occupies residues 190–208 (TDVFQVVVMLVGFWVILAR). Topologically, residues 209–243 (GVILLGGPRNVLSLAQNHSRINLMDFDPDPRSRYT) are extracellular. Residues 244–266 (FWTFIVGGTLVWLSMYGVNQAQV) traverse the membrane as a discontinuously helical segment. An iodide-binding site is contributed by tryptophan 255. A Na(+)-binding site is contributed by methionine 258. Residues 267-278 (QRYVACHTEGKA) are Cytoplasmic-facing. Residues 279 to 301 (KLALLVNQLGLFLIVASAACCGI) form a helical membrane-spanning segment. Residues 302–335 (VMFVYYKDCDPLLTGRISAPDQYMPLLVLDIFED) are Extracellular-facing. A helical transmembrane segment spans residues 336-363 (LPGVPGLFLACAYSGTLSTASTSINAMA). Residues 364–386 (AVTVEDLIKPRMPGLAPRKLVFI) are Cytoplasmic-facing. Residues 387 to 408 (SKGLSFIYGSACLTVAALSSLL) form a helical membrane-spanning segment. The Extracellular segment spans residues 409–411 (GGG). The helical transmembrane segment at 412–437 (VLQGSFTVMGVISGPLLGAFTLGMLL) threads the bilayer. Iodide is bound at residue leucine 413. 2 residues coordinate Na(+): serine 416 and phenylalanine 417. Iodide is bound at residue phenylalanine 417. Residues 438-441 (PACN) lie on the Cytoplasmic side of the membrane. The chain crosses the membrane as a helical span at residues 442 to 465 (TPGVLSGLAAGLAVSLWVAVGATL). The Extracellular portion of the chain corresponds to 466-520 (YPPGEQTMGVLPTSAAGCTNDSVLLGPPGATNASNGIPSSGMDTGRPALADTFYA). N-linked (GlcNAc...) asparagine glycosylation is found at asparagine 485 and asparagine 497. The chain crosses the membrane as a helical span at residues 521–545 (ISYLYYGALGTLTTMLCGALISYLT). The Cytoplasmic portion of the chain corresponds to 546–618 (GPTKRSSLGP…YLGHDVETNL (73 aa)). At serine 551 the chain carries Phosphoserine; by PKA. The disordered stretch occupies residues 587 to 618 (EDIPAVTKKPPGLKPGAETHPLYLGHDVETNL).

It belongs to the sodium:solute symporter (SSF) (TC 2.A.21) family. Monomer.

Its subcellular location is the cell membrane. It localises to the cytoplasm. The enzyme catalyses iodide(out) + 2 Na(+)(out) = iodide(in) + 2 Na(+)(in). The catalysed reaction is chlorate(out) + 2 Na(+)(out) = chlorate(in) + 2 Na(+)(in). It catalyses the reaction thiocyanate(out) + 2 Na(+)(out) = thiocyanate(in) + 2 Na(+)(in). It carries out the reaction nitrate(out) + 2 Na(+)(out) = nitrate(in) + 2 Na(+)(in). The enzyme catalyses selenocyanate(out) + 2 Na(+)(out) = selenocyanate(in) + 2 Na(+)(in). With respect to regulation, perchlorate inhibits iodide transport activity. Oxyanions inhibit iodide transport activity by blocking the binding sites for iodide and one of the sodium ions. In terms of biological role, sodium:iodide symporter that mediates the transport of iodide into the thyroid gland. Can also mediate the transport of chlorate, thiocynate, nitrate and selenocynate. The chain is Sodium/iodide cotransporter (Slc5a5) from Rattus norvegicus (Rat).